Reading from the N-terminus, the 320-residue chain is Ferrochelatase (320 aa).

Fe cation-binding residues include His-194 and Glu-275.

Belongs to the ferrochelatase family.

The protein localises to the cytoplasm. The catalysed reaction is heme b + 2 H(+) = protoporphyrin IX + Fe(2+). It functions in the pathway porphyrin-containing compound metabolism; protoheme biosynthesis; protoheme from protoporphyrin-IX: step 1/1. Catalyzes the ferrous insertion into protoporphyrin IX. The sequence is that of Ferrochelatase from Enterobacter sp. (strain 638).